The primary structure comprises 38 residues: Large ribosomal subunit protein bL36 (38 aa).

It belongs to the bacterial ribosomal protein bL36 family.

The protein is Large ribosomal subunit protein bL36 of Anaeromyxobacter dehalogenans (strain 2CP-1 / ATCC BAA-258).